Consider the following 156-residue polypeptide: Small ribosomal subunit protein uS7c (156 aa).

The protein belongs to the universal ribosomal protein uS7 family. In terms of assembly, part of the 30S ribosomal subunit.

The protein resides in the plastid. It localises to the chloroplast. In terms of biological role, one of the primary rRNA binding proteins, it binds directly to 16S rRNA where it nucleates assembly of the head domain of the 30S subunit. This Tupiella akineta (Green alga) protein is Small ribosomal subunit protein uS7c (rps7).